A 298-amino-acid polypeptide reads, in one-letter code: CCR4-NOT transcription complex subunit 9 (298 aa).

Belongs to the CNOT9 family. In terms of assembly, homodimer. Component of the CCR4-NOT complex.

Its subcellular location is the nucleus. The protein resides in the cytoplasm. The protein localises to the P-body. Its function is as follows. Component of the CCR4-NOT complex which is one of the major cellular mRNA deadenylases and is linked to various cellular processes including bulk mRNA degradation, miRNA-mediated repression, translational repression during translational initiation and general transcription regulation. Additional complex functions may be a consequence of its influence on mRNA expression. Involved in down-regulation of MYB- and JUN-dependent transcription. Enhances ligand-dependent transcriptional activity of nuclear hormone receptors. May play a role in cell differentiation. This chain is CCR4-NOT transcription complex subunit 9, found in Danio rerio (Zebrafish).